Reading from the N-terminus, the 391-residue chain is Superoxide dismutase [Fe] 1, chloroplastic (391 aa).

Residues M1 to Q73 constitute a chloroplast transit peptide. The segment covering V87 to A119 has biased composition (acidic residues). Residues V87 to S120 form a disordered region. Fe cation-binding residues include H148, H202, D301, and H305. The interval M370 to V391 is disordered. A compositionally biased stretch (polar residues) spans Q381–V391.

Belongs to the iron/manganese superoxide dismutase family. Homodimer. The cofactor is Fe cation.

It localises to the plastid. It is found in the chloroplast. The enzyme catalyses 2 superoxide + 2 H(+) = H2O2 + O2. Destroys superoxide anion radicals which are normally produced within the cells and which are toxic to biological systems. The sequence is that of Superoxide dismutase [Fe] 1, chloroplastic from Oryza sativa subsp. japonica (Rice).